A 382-amino-acid chain; its full sequence is Sphingosine 1-phosphate receptor 1 (382 aa).

Over 1-46 (MGSTRIPLVKALHSPVSDYVNYDIIVRHYNYTGKLKISADKDNGIK) the chain is Extracellular. Residue lysine 10 is modified to N6-acetyllysine. Residue asparagine 30 is glycosylated (N-linked (GlcNAc...) asparagine). A helical transmembrane segment spans residues 47 to 68 (LISVVFILICCFIILENIFVLL). Residues 69–82 (TIWKTKKFHRPMYY) lie on the Cytoplasmic side of the membrane. Residues 83–104 (FIGNLALSDLLAGVAYTANLLL) form a helical membrane-spanning segment. Topologically, residues 105-116 (SGATTYKLTPAQ) are extracellular. The helical transmembrane segment at 117–138 (WFLREGSMFVALSASVFSLLAI) threads the bilayer. Residue 120–121 (RE) participates in sphing-4-enine 1-phosphate binding. Residues 139–160 (AIERYITMLKMKLHNGSNRFRS) are Cytoplasmic-facing. A helical transmembrane segment spans residues 161 to 182 (FLLISACWVISLILGGLPIMGW). The Extracellular segment spans residues 183–196 (NCISTLPSCSTVLP). Cysteine 184 and cysteine 191 are oxidised to a cystine. The chain crosses the membrane as a helical span at residues 197–224 (LYHKHYILFCTTVFTLLLLSIVILYCRI). Residues 225 to 257 (YSLVRTRSRRLTFRKNISKASRSSEKSLALLKT) are Cytoplasmic-facing. Position 236 is a phosphothreonine; by PKB/AKT1 (threonine 236). The helical transmembrane segment at 258–278 (VIIVLGVFIACWAPLFILLLL) threads the bilayer. 265-269 (FIACW) is a binding site for sphing-4-enine 1-phosphate. The Extracellular portion of the chain corresponds to 279–289 (DVGCKVKTCDI). Cysteine 282 and cysteine 287 form a disulfide bridge. The chain crosses the membrane as a helical span at residues 290–310 (LFRTEYFLVLAVLNSGTNPII). Topologically, residues 311-382 (YTLSNKEMRR…MSSGNVNSSS (72 aa)) are cytoplasmic. Cysteine 328 carries the S-palmitoyl cysteine lipid modification. A disordered region spans residues 349–382 (EFSRSKSDNSSHPQKDDGDNPETIMSSGNVNSSS). Phosphoserine is present on residues serine 351 and serine 353. Basic and acidic residues predominate over residues 351–366 (SRSKSDNSSHPQKDDG). Over residues 371-382 (TIMSSGNVNSSS) the composition is skewed to polar residues.

The protein belongs to the G-protein coupled receptor 1 family. Interacts with GNAI1 and GNAI3. Interacts with CD69; this interaction promotes S1PR1 degradation. Post-translationally, S1P-induced endothelial cell migration requires the PKB/AKT1-mediated phosphorylation of the third intracellular loop at the Thr-236 residue. In terms of processing, palmitoylated by ZDHHC5. Palmitoylation is required for targeting to plasma membrane, enabling G(i) coupling.

The protein localises to the cell membrane. It is found in the endosome. Its subcellular location is the membrane raft. Its function is as follows. G-protein coupled receptor for the bioactive lysosphingolipid sphingosine 1-phosphate (S1P) that seems to be coupled to the G(i) subclass of heteromeric G proteins. Signaling leads to the activation of RAC1, SRC, PTK2/FAK1 and MAP kinases. Plays an important role in cell migration, probably via its role in the reorganization of the actin cytoskeleton and the formation of lamellipodia in response to stimuli that increase the activity of the sphingosine kinase SPHK1. Required for normal chemotaxis toward sphingosine 1-phosphate. Required for normal embryonic heart development and normal cardiac morphogenesis. Plays an important role in the regulation of sprouting angiogenesis and vascular maturation. Inhibits sprouting angiogenesis to prevent excessive sprouting during blood vessel development. Required for normal egress of mature T-cells from the thymus into the blood stream and into peripheral lymphoid organs. Plays a role in the migration of osteoclast precursor cells, the regulation of bone mineralization and bone homeostasis. Plays a role in responses to oxidized 1-palmitoyl-2-arachidonoyl-sn-glycero-3-phosphocholine by pulmonary endothelial cells and in the protection against ventilator-induced lung injury. This chain is Sphingosine 1-phosphate receptor 1 (S1PR1), found in Bos taurus (Bovine).